The sequence spans 89 residues: MGFTDETVRFNLDDGNKKEISETLTHVYRSLEEKGYNPINQIVGYVLSGDPAYVPRYNDARNQIRKYERDEIVEELVRYYLQGNGIDLK.

It belongs to the UPF0297 family.

The protein is UPF0297 protein SMU_2079c of Streptococcus mutans serotype c (strain ATCC 700610 / UA159).